A 921-amino-acid polypeptide reads, in one-letter code: Inter-alpha-trypsin inhibitor heavy chain H4 (921 aa).

Positions 1–27 are cleaved as a signal peptide; it reads MKTLSPTGYGLLLVLPLLLAVLQSTTA. The VIT domain maps to 28 to 146; sequence HKNDINIYSL…KVTFELVYEE (119 aa). N-linked (GlcNAc...) asparagine glycans are attached at residues asparagine 80, asparagine 205, and asparagine 242. A VWFA domain is found at 270–428; sequence PKNVIFVIDT…YAFLEKMALE (159 aa). 2 N-linked (GlcNAc...) asparagine glycosylation sites follow: asparagine 513 and asparagine 577. Residues 591–646 form a disordered region; sequence KPEGQEQSQVAEKPVENGNRQGNTHSGHSSFQFHSVGDRTSRLTGGSSVDPVFSHR. A compositionally biased stretch (polar residues) spans 608-623; that stretch reads GNRQGNTHSGHSSFQF. Threonine 712 carries an O-linked (GalNAc...) threonine glycan. Cysteine 738 and cysteine 916 form a disulfide bridge.

It belongs to the ITIH family. As to quaternary structure, interacts (via C-terminus) with DNAJC1 (via SANT 2 domain). Appears to be both N- and O-glycosylated. Post-translationally, cleaved by plasma kallikrein to yield 55- and 25-kDa fragments. Liver specific.

It localises to the secreted. Functionally, type II acute-phase protein (APP) involved in inflammatory responses to trauma. May also play a role in liver development or regeneration. The protein is Inter-alpha-trypsin inhibitor heavy chain H4 (ITIH4) of Sus scrofa (Pig).